The chain runs to 201 residues: CASP-like protein 2B2 (201 aa).

Topologically, residues 1–28 (MSYLGVGVSPGNVTGSSTKMKLIDRKVR) are cytoplasmic. The chain crosses the membrane as a helical span at residues 29–49 (VTELILRSLVCAFALVAAILV). Residues 50 to 71 (ATDVQVREIFTIQKKAKFTDMK) are Extracellular-facing. A helical membrane pass occupies residues 72 to 92 (ALVFLVVINGIAAGYSLVQAV). Topologically, residues 93–108 (CCLVGLMKGSVLLSEP) are cytoplasmic. A helical membrane pass occupies residues 109–129 (LAWAIFFGDQAVAYLCVAGVA). Residues 130–166 (AAAQSAAFAKLGQPELQWMKICDMYGKFCNQVGEGIA) are Extracellular-facing. The chain crosses the membrane as a helical span at residues 167–187 (SALFACIGMVLISCISAFGVF). The Cytoplasmic portion of the chain corresponds to 188–201 (RLYGGSKPRQSSRW).

Belongs to the Casparian strip membrane proteins (CASP) family. Homodimer and heterodimers.

Its subcellular location is the cell membrane. The chain is CASP-like protein 2B2 from Arabidopsis lyrata subsp. lyrata (Lyre-leaved rock-cress).